The sequence spans 188 residues: HTH-type transcriptional repressor AcnR (188 aa).

One can recognise an HTH tetR-type domain in the interval 10-70 (VNSRQEILEG…ALAREDAARM (61 aa)). The H-T-H motif DNA-binding region spans 33–52 (TVRRLEEATGKSRGAIFHHF). Citrate is bound by residues 79-80 (LV), Arg-130, and Asn-134. Position 181 (Glu-181) interacts with Mg(2+). A citrate-binding site is contributed by Arg-185.

Homodimer.

Functionally, acnR negatively controls the expression of the aconitase gene acn. The sequence is that of HTH-type transcriptional repressor AcnR from Corynebacterium efficiens (strain DSM 44549 / YS-314 / AJ 12310 / JCM 11189 / NBRC 100395).